A 303-amino-acid polypeptide reads, in one-letter code: Putative deoxyribose-phosphate aldolase (303 aa).

Aspartate 157 (proton donor/acceptor) is an active-site residue. Residue lysine 220 is the Schiff-base intermediate with acetaldehyde of the active site. The Proton donor/acceptor role is filled by lysine 256.

It belongs to the DeoC/FbaB aldolase family. DeoC type 2 subfamily.

It catalyses the reaction 2-deoxy-D-ribose 5-phosphate = D-glyceraldehyde 3-phosphate + acetaldehyde. Its pathway is carbohydrate degradation; 2-deoxy-D-ribose 1-phosphate degradation; D-glyceraldehyde 3-phosphate and acetaldehyde from 2-deoxy-alpha-D-ribose 1-phosphate: step 2/2. Functionally, catalyzes a reversible aldol reaction between acetaldehyde and D-glyceraldehyde 3-phosphate to generate 2-deoxy-D-ribose 5-phosphate. The chain is Putative deoxyribose-phosphate aldolase from Caenorhabditis elegans.